The sequence spans 410 residues: Tryptophan synthase beta chain (410 aa).

Position 98 is an N6-(pyridoxal phosphate)lysine (K98).

This sequence belongs to the TrpB family. As to quaternary structure, tetramer of two alpha and two beta chains. Requires pyridoxal 5'-phosphate as cofactor.

It catalyses the reaction (1S,2R)-1-C-(indol-3-yl)glycerol 3-phosphate + L-serine = D-glyceraldehyde 3-phosphate + L-tryptophan + H2O. Its pathway is amino-acid biosynthesis; L-tryptophan biosynthesis; L-tryptophan from chorismate: step 5/5. The beta subunit is responsible for the synthesis of L-tryptophan from indole and L-serine. The protein is Tryptophan synthase beta chain of Roseobacter denitrificans (strain ATCC 33942 / OCh 114) (Erythrobacter sp. (strain OCh 114)).